A 607-amino-acid chain; its full sequence is Leucine-rich repeat-containing protein 63 (607 aa).

7 LRR repeats span residues 357–378, 380–401, 403–424, 426–447, 449–470, 471–497, and 498–524; these read QLVY…VLYL, NLQV…IQQL, YLRK…LFCL, YLEE…IQKL, SLEK…ILKL, NLVK…NPPR, and LTHI…VVQK.

The polypeptide is Leucine-rich repeat-containing protein 63 (Lrrc63) (Rattus norvegicus (Rat)).